Consider the following 928-residue polypeptide: MALSFVFITCFMILLDTSQSCHTPDDFVAITSPGHIMIGGLFAIHEKMLSSDDHPRQPQIQKCVGFEISVFLQTLAMIHSIEMINNSSLLSGVKLGYEIYDTCTEVTAAMAATLRFLSKFNCSRETVIFQCDYSSYVPRVKAIIGAGYSEISMAVSRMLNLQLMPQVSYESTAEILSDKIRFPSFLRTVPSDFYQTKAMAHLIRQSGWNWVGAITTDDDYGRLALNTFAIQAAENNVCIAFKEVLPAFLSDNTIEVRINQTLEKIIAEAQVNVIVVFLRKFHVFNLFNKAIERKISKIWIASDNWSTAAKIITIPNVKKLGKVVGFTFRRGNMSSFHSFLQTLHMYPSDNNKPLHEFAMLFSACKHIKDGDLSQCISNYSQATWTYDTTKTIETHLFKRNDFLWHYTEPGLIHSIQLAVLALGHAIRDLCQDRDCQKPNAFQPWELLAVLKNVTFTDGKNSFHFDAHGDLNTGYEVVLWKETNGLMTVTKMAEYDLQHDVFITTNQETKHEFRKLKQILSKCSKECIPGQMKKATGSQHSCCYECVNCPENHYSNETDMDHCLVCNNETHWAPVRSTMCFEKEVEYLDWDDSLALLLIALSLLGIAFVLAVGIIFTRNLKTPVVKSSGGLVVCYVMLACHALNFASTGFFIGEPQDFTCKTRQTLFGVSFTLCVSCILTKSLKILLAFSFDPTLKTFLKCLYRPVPIVLTCTGIQVVICTLWLVLAAPTVEENTSLPRVIILECEEGSALAFGTMLGYIAVLAFICFVFAFKGRKLPENYNEAKFLTFGMLIYFIAWITFIPVYATTFGKYLPAVEIIVILISNYGILCCTFFPKCYIILCKQKTNTKSVFLQMVYNYSAHSVDSLALSHVSLDSASHSTATTNPRPGNKTAACQNYKHLPVQVLAHTGMEKTMHASKTLHQKRSSSI.

A signal peptide spans 1-20 (MALSFVFITCFMILLDTSQS). Residues 21–594 (CHTPDDFVAI…EYLDWDDSLA (574 aa)) are Extracellular-facing. N-linked (GlcNAc...) asparagine glycosylation is found at N332 and N555. The helical transmembrane segment at 595 to 615 (LLLIALSLLGIAFVLAVGIIF) threads the bilayer. Over 616-630 (TRNLKTPVVKSSGGL) the chain is Cytoplasmic. Residues 631–651 (VVCYVMLACHALNFASTGFFI) traverse the membrane as a helical segment. Over 652 to 669 (GEPQDFTCKTRQTLFGVS) the chain is Extracellular. Residues 670–690 (FTLCVSCILTKSLKILLAFSF) traverse the membrane as a helical segment. Over 691–706 (DPTLKTFLKCLYRPVP) the chain is Cytoplasmic. Residues 707–727 (IVLTCTGIQVVICTLWLVLAA) traverse the membrane as a helical segment. Residues 728-750 (PTVEENTSLPRVIILECEEGSAL) lie on the Extracellular side of the membrane. The chain crosses the membrane as a helical span at residues 751–771 (AFGTMLGYIAVLAFICFVFAF). At 772 to 784 (KGRKLPENYNEAK) the chain is on the cytoplasmic side. The helical transmembrane segment at 785-805 (FLTFGMLIYFIAWITFIPVYA) threads the bilayer. Residues 806–812 (TTFGKYL) are Extracellular-facing. Residues 813 to 833 (PAVEIIVILISNYGILCCTFF) form a helical membrane-spanning segment. At 834–928 (PKCYIILCKQ…TLHQKRSSSI (95 aa)) the chain is on the cytoplasmic side.

This sequence belongs to the G-protein coupled receptor 3 family. As to quaternary structure, homodimer; disulfide-linked. Post-translationally, N-glycosylated. As to expression, high expression in soft palate. Weak expression in kidney, liver, lung and brain. No expression detected in heart, testis, skeletal muscle amd spleen.

The protein resides in the cell membrane. Functionally, receptor activated by multiple ligands, including osteocalcin (BGLAP), basic amino acids, and various cations. Activated by amino acids with a preference for basic amino acids such as L-Lys, L-Arg and L-ornithine but also by small and polar amino acids. The L-alpha amino acids respond is augmented by divalent cations Ca(2+) and Mg(2+). Seems to act through a G(q)/G(11) and G(i)-coupled pathway. Regulates testosterone production by acting as a ligand for uncarboxylated osteocalcin hormone: osteocalcin-binding at the surface of Leydig cells initiates a signaling response that promotes the expression of enzymes required for testosterone synthesis in a CREB-dependent manner. Mediates the non-genomic effects of androgens in multiple tissue. May coordinate nutritional and hormonal anabolic signals through the sensing of extracellular amino acids, osteocalcin, divalent ions and its responsiveness to anabolic steroids. This chain is G-protein coupled receptor family C group 6 member A (Gprc6a), found in Rattus norvegicus (Rat).